The primary structure comprises 311 residues: Mitochondrial FAD carrier protein FLX1 (311 aa).

3 Solcar repeats span residues 7–101 (TPLQ…TKEL), 123–210 (MNSL…LKQR), and 224–310 (LTNL…LKHR). 6 consecutive transmembrane segments (helical) span residues 13–33 (VISGLSAGSVTTLVVHPLDLL), 77–97 (LSINLFGNAIAWGVYFGLYGV), 129–149 (LSAGASSGLMTAILTNPIWVI), 183–203 (LWKGLVPALFGVSQGALYFAV), 230–250 (IEITSLGKMVSVTLVYPFQLL), and 266–286 (LFPLIKLIIANDGFVGLYKGL).

It belongs to the mitochondrial carrier (TC 2.A.29) family.

The protein localises to the mitochondrion inner membrane. Transport of FAD from the cytosol to the mitochondrial matrix. This Saccharomyces cerevisiae (strain ATCC 204508 / S288c) (Baker's yeast) protein is Mitochondrial FAD carrier protein FLX1 (FLX1).